We begin with the raw amino-acid sequence, 52 residues long: Creatine kinase B-type (52 aa).

Positions 1 to 52 (AKVLTLDLYKKLRDKSTPSGFTLDDIIQNEHLGYVLTCPSNLGTXLRAXVHV) constitute a Phosphagen kinase C-terminal domain. Residues 1 to 52 (AKVLTLDLYKKLRDKSTPSGFTLDDIIQNEHLGYVLTCPSNLGTXLRAXVHV) enclose the Phosphagen kinase N-terminal domain. Residues Arg-13 and Arg-47 each coordinate ATP.

The protein belongs to the ATP:guanido phosphotransferase family. Dimer of identical or non-identical chains, which can be either B (brain type) or M (muscle type). With MM being the major form in skeletal muscle and myocardium, MB existing in myocardium, and BB existing in many tissues, especially brain. In terms of tissue distribution, expressed in rectal gland, brain, skeletal muscle (at protein level).

It localises to the cytoplasm. The protein localises to the cytosol. The protein resides in the mitochondrion. It is found in the basal cell membrane. It catalyses the reaction creatine + ATP = N-phosphocreatine + ADP + H(+). Reversibly catalyzes the transfer of phosphate between ATP and various phosphogens (e.g. creatine phosphate). Creatine kinase isoenzymes play a central role in energy transduction in tissues with large, fluctuating energy demands, such as skeletal muscle, heart, brain and spermatozoa. This chain is Creatine kinase B-type, found in Squalus acanthias (Spiny dogfish).